The primary structure comprises 229 residues: NAD(P)H-quinone oxidoreductase subunit K, chloroplastic (229 aa).

[4Fe-4S] cluster is bound by residues C43, C44, C108, and C139.

Belongs to the complex I 20 kDa subunit family. In terms of assembly, NDH is composed of at least 16 different subunits, 5 of which are encoded in the nucleus. It depends on [4Fe-4S] cluster as a cofactor.

Its subcellular location is the plastid. The protein resides in the chloroplast thylakoid membrane. The enzyme catalyses a plastoquinone + NADH + (n+1) H(+)(in) = a plastoquinol + NAD(+) + n H(+)(out). The catalysed reaction is a plastoquinone + NADPH + (n+1) H(+)(in) = a plastoquinol + NADP(+) + n H(+)(out). In terms of biological role, NDH shuttles electrons from NAD(P)H:plastoquinone, via FMN and iron-sulfur (Fe-S) centers, to quinones in the photosynthetic chain and possibly in a chloroplast respiratory chain. The immediate electron acceptor for the enzyme in this species is believed to be plastoquinone. Couples the redox reaction to proton translocation, and thus conserves the redox energy in a proton gradient. The sequence is that of NAD(P)H-quinone oxidoreductase subunit K, chloroplastic from Aethionema grandiflorum (Persian stone-cress).